Reading from the N-terminus, the 1447-residue chain is Adhesion G protein-coupled receptor L3 (1447 aa).

The signal sequence occupies residues 1–19; sequence MWPSQLLIFMMLLAPIIHA. The Extracellular segment spans residues 20-862; sequence FSRAPIPMAV…VKHSDAVHDL (843 aa). The SUEL-type lectin domain maps to 35–124; it reads SCESYPIELR…KYLEVQYECV (90 aa). Disulfide bonds link Cys-36-Cys-66, Cys-45-Cys-123, Cys-78-Cys-110, Cys-91-Cys-97, and Cys-135-Cys-317. The N-linked (GlcNAc...) asparagine glycan is linked to Asn-93. An Olfactomedin-like domain is found at 134–393; the sequence is LCPGLLKGVY…VVKYSLDFGP (260 aa). The tract at residues 249–279 is interaction with FLRT3; sequence YHDTSPYRWGGKSDIDLAVDENGLWVIYATE. Positions 264, 312, 313, and 367 each coordinate Ca(2+). A disordered region spans residues 426-473; sequence DISTTGPLGMGSTTTSTTLRTTTLSPGRSTTPSVSGRRNRSTSTPSPA. A compositionally biased stretch (low complexity) spans 428-458; sequence STTGPLGMGSTTTSTTLRTTTLSPGRSTTPS. Asn-464, Asn-549, Asn-746, Asn-759, Asn-804, and Asn-830 each carry an N-linked (GlcNAc...) asparagine glycan. The GAIN-B domain maps to 675–854; that stretch reads DIVRENTDNI…AVLMAHVEVK (180 aa). 2 disulfides stabilise this stretch: Cys-805-Cys-836 and Cys-824-Cys-838. A GPS region spans residues 805-854; the sequence is CSFWSYSKRTMTGYWSTQGCRLLTTNKTHTTCSCNHLTNFAVLMAHVEVK. The interval 842–855 is stachel; the sequence is TNFAVLMAHVEVKH. The chain crosses the membrane as a helical span at residues 863-888; it reads LLDVITWVGILLSLVCLLICIFTFCF. The Cytoplasmic segment spans residues 889–896; it reads FRGLQSDR. Residues 897–918 traverse the membrane as a helical segment; it reads NTIHKNLCISLFVAELLFLIGI. Residues 919-926 are Extracellular-facing; it reads NRTDQPIA. A helical transmembrane segment spans residues 927–950; the sequence is CAVFAALLHFFFLAAFTWMFLEGV. Cys-927 and Cys-999 form a disulfide bridge. Topologically, residues 951–967 are cytoplasmic; sequence QLYIMLVEVFESEHSRR. Residues 968–990 traverse the membrane as a helical segment; it reads KYFYLVGYGMPALIVAVSAAVDY. The Extracellular segment spans residues 991-1005; sequence RSYGTDKVCWLRLDT. Residues 1006–1027 form a helical membrane-spanning segment; the sequence is YFIWSFIGPATLIIMLNVIFLG. Over 1028 to 1053 the chain is Cytoplasmic; that stretch reads IALYKMFHHTAILKPESGCLDNIKSW. Residues 1054–1073 traverse the membrane as a helical segment; sequence VIGAIALLCLLGLTWAFGLM. At 1074–1078 the chain is on the extracellular side; that stretch reads YINES. A glycan (N-linked (GlcNAc...) asparagine) is linked at Asn-1076. Residues 1079–1104 traverse the membrane as a helical segment; sequence TVIMAYLFTIFNSLQGMFIFIFHCVL. At 1105–1447 the chain is on the cytoplasmic side; sequence QKKVRKEYGK…KGPAHLVTSL (343 aa). The segment at 1123–1147 is disordered; the sequence is GKSTESSIGSGKTSGSRTPGRYSTG. Ser-1164 carries the post-translational modification Phosphoserine. The interval 1423–1447 is disordered; it reads IVPPNKDGTPPEGSSKGPAHLVTSL. A PDZ-binding motif is present at residues 1442-1447; that stretch reads HLVTSL.

This sequence belongs to the G-protein coupled receptor 2 family. LN-TM7 subfamily. As to quaternary structure, heterodimer of 2 chains generated by proteolytic processing; the large extracellular N-terminal fragment and the membrane-bound C-terminal fragment predominantly remain associated and non-covalently linked. Interacts (via olfactomedin-like domain) with FLRT1 (via extracellular domain). Interacts (via olfactomedin-like domain) with FLRT2 (via extracellular domain). Interacts (via olfactomedin-like domain) with FLRT3 (via extracellular domain); the interaction is direct. Interacts (via extracellular domain) with TENM1. Interacts (via extracellular domain) with TENM2. Interacts (via extracellular domain) with TENM3. Identified in a complex with FLRT3 and UNC5B; does not interact with UNC5B by itself. Identified in a complex with FLRT3 and UNC5D; does not interact with UNC5D by itself. In terms of assembly, interacts (via PDZ-binding motif) with SHANK3. Interacts (via PDZ-binding motif) with DLG4. Autoproteolytically processed at the GPS region of the GAIN-B domain; this cleavage modulates receptor activity.

Its subcellular location is the cell membrane. It is found in the postsynaptic cell membrane. The protein resides in the cell projection. The protein localises to the axon. It localises to the cell junction. Its activity is regulated as follows. Forms a heterodimer of 2 chains generated by proteolytic processing that remain associated through non-covalent interactions mediated by the GAIN-B domain. In the inactivated receptor, the Stachel sequence (also named stalk) is embedded in the GAIN-B domain, where it adopts a beta-strand conformation. On activation, the Stachel moves into the 7 transmembrane region and adopts a twisted hook-shaped configuration that forms contacts within the receptor, leading to coupling of a G-alpha protein, which activates signaling. The cleaved GAIN-B and N-terminal domains can then dissociate from the rest of the receptor. In terms of biological role, orphan adhesion G-protein coupled receptor (aGPCR), which mediates synapse specificity. Ligand binding causes a conformation change that triggers signaling via guanine nucleotide-binding proteins (G proteins) and modulates the activity of downstream effectors. ADGRL3 is coupled with different classes of G alpha proteins, such as G(12)/G(13), G(s), G(i) or G(q), depending on the context. Coupling to G(12)/G(13) G proteins, which mediates the activation Rho small GTPases is the most efficient. Following G-protein coupled receptor activation, associates with cell adhesion molecules that are expressed at the surface of adjacent cells to direct synapse specificity. Specifically mediates the establishment of Schaffer-collateral synapses formed by CA3-region axons on CA1-region pyramidal neurons in the hippocampus. Localizes to postsynaptic spines in excitatory synapses in the S.oriens and S.radiatum and interacts with presynaptic cell adhesion molecules FLRT3 and TENM2, promoting synapse formation. Plays a role in the development of glutamatergic synapses in the cortex. Important in determining the connectivity rates between the principal neurons in the cortex. Its function is as follows. Orphan adhesion G-protein coupled receptor (aGPCR), which mediates synapse specificity. Ligand binding causes a conformation change that triggers signaling via guanine nucleotide-binding proteins (G proteins) and modulates the activity of downstream effectors, such as adenylate cyclase. Isoform 1 is specifically coupled to G(s) G proteins and mediates activation of adenylate cyclase activity. Following G-protein coupled receptor activation, undergoes liquid-liquid phase transition, associates with (1) cell adhesion molecules that are expressed at the surface of adjacent cells, as well as (2) PDZ-containing proteins, such as SHANK3 and DLG4, in the cytoplasm to direct synapse formation. This Homo sapiens (Human) protein is Adhesion G protein-coupled receptor L3.